We begin with the raw amino-acid sequence, 959 residues long: DNA translocase FtsK 1 (959 aa).

3 helical membrane passes run 1-21 (MGLG…WRYV), 39-59 (IWLA…LTSG), and 83-103 (GWTG…PMVF). The Cytoplasmic segment spans residues 104-959 (GHSWRQLLAR…REVIAPGGGD (856 aa)). Residues 122-427 (PVQADARHDE…AAPPPPAVPA (306 aa)) form a disordered region. A compositionally biased stretch (basic and acidic residues) spans 126–136 (DARHDEADDGL). Low complexity-rich tracts occupy residues 220–229 (ATPKAATQAP) and 264–286 (APSA…DAPA). The segment covering 287 to 298 (SAPPEPAEPSPP) has biased composition (pro residues). The segment covering 333–379 (PEPEPEPEAETEVTPEAEAEPEAEPEAEAEPEAEAEAEAEAEAEPEA) has biased composition (acidic residues). Positions 380–403 (EAPAPESVAPALQEAEAATAAEAP) are enriched in low complexity. In terms of domain architecture, FtsK spans 605–814 (GNPVVTDLAR…FQVSSKIDSR (210 aa)). 625–630 (GSGKSV) serves as a coordination point for ATP.

It belongs to the FtsK/SpoIIIE/SftA family. In terms of assembly, homohexamer. Forms a ring that surrounds DNA.

It localises to the cell inner membrane. Its function is as follows. Essential cell division protein that coordinates cell division and chromosome segregation. The N-terminus is involved in assembly of the cell-division machinery. The C-terminus functions as a DNA motor that moves dsDNA in an ATP-dependent manner towards the dif recombination site, which is located within the replication terminus region. Translocation stops specifically at Xer-dif sites, where FtsK interacts with the Xer recombinase, allowing activation of chromosome unlinking by recombination. FtsK orienting polar sequences (KOPS) guide the direction of DNA translocation. FtsK can remove proteins from DNA as it translocates, but translocation stops specifically at XerCD-dif site, thereby preventing removal of XerC and XerD from dif. This chain is DNA translocase FtsK 1 (ftsK1), found in Ralstonia nicotianae (strain ATCC BAA-1114 / GMI1000) (Ralstonia solanacearum).